The sequence spans 416 residues: UDP-N-acetylglucosamine 1-carboxyvinyltransferase (416 aa).

22–23 contacts phosphoenolpyruvate; it reads KN. Arg92 is a UDP-N-acetyl-alpha-D-glucosamine binding site. Cys116 functions as the Proton donor in the catalytic mechanism. Residue Cys116 is modified to 2-(S-cysteinyl)pyruvic acid O-phosphothioketal. Residues 121 to 125, Asp304, and Ile326 contribute to the UDP-N-acetyl-alpha-D-glucosamine site; that span reads RPVDQ.

Belongs to the EPSP synthase family. MurA subfamily.

Its subcellular location is the cytoplasm. It carries out the reaction phosphoenolpyruvate + UDP-N-acetyl-alpha-D-glucosamine = UDP-N-acetyl-3-O-(1-carboxyvinyl)-alpha-D-glucosamine + phosphate. It participates in cell wall biogenesis; peptidoglycan biosynthesis. Cell wall formation. Adds enolpyruvyl to UDP-N-acetylglucosamine. The polypeptide is UDP-N-acetylglucosamine 1-carboxyvinyltransferase (Cupriavidus taiwanensis (strain DSM 17343 / BCRC 17206 / CCUG 44338 / CIP 107171 / LMG 19424 / R1) (Ralstonia taiwanensis (strain LMG 19424))).